We begin with the raw amino-acid sequence, 760 residues long: Protein HEADING DATE 3B (760 aa).

2 stretches are compositionally biased toward gly residues: residues Met1–Gly12 and Ser60–Gly70. 4 disordered regions span residues Met1–Lys120, Ser144–Asp169, Val236–Ser262, and Thr285–Thr346. Low complexity predominate over residues Ser71–Gln87. The segment covering Ser94–Gly107 has biased composition (polar residues). The segment covering His108–Lys120 has biased composition (basic and acidic residues). Basic and acidic residues predominate over residues Val236 to Glu248. Positions Lys349–Glu355 match the Nuclear localization signal motif. 2 disordered regions span residues Leu485–Leu543 and Phe707–Asp760. Composition is skewed to polar residues over residues Gln511–Lys522, Ala531–Leu543, and Phe707–Val730.

In terms of tissue distribution, expressed in mesophyll cells of young leaves, anthers, stigmas and the top of lemmas.

It localises to the nucleus. Functionally, involved in the regulation of flowering time under short day (SD) and long day (LD) conditions. Functions as a floral promoter by negatively regulating GHD7, a repressor of the photoperiodic control of flowering. Acts as a floral activator in the LD photoperiodic pathway. Involved in blue light-induced activation of EHD1 expression to promote flowering under SD conditions. The polypeptide is Protein HEADING DATE 3B (HD3B) (Oryza sativa subsp. japonica (Rice)).